A 470-amino-acid polypeptide reads, in one-letter code: Glutamate--tRNA ligase (470 aa).

The short motif at 9–19 (PSPTGFLHVGG) is the 'HIGH' region element. Residues 236 to 240 (KLSKR) carry the 'KMSKS' region motif. Lys-239 is an ATP binding site.

This sequence belongs to the class-I aminoacyl-tRNA synthetase family. Glutamate--tRNA ligase type 1 subfamily. In terms of assembly, monomer.

The protein localises to the cytoplasm. It catalyses the reaction tRNA(Glu) + L-glutamate + ATP = L-glutamyl-tRNA(Glu) + AMP + diphosphate. Catalyzes the attachment of glutamate to tRNA(Glu) in a two-step reaction: glutamate is first activated by ATP to form Glu-AMP and then transferred to the acceptor end of tRNA(Glu). The protein is Glutamate--tRNA ligase of Psychromonas ingrahamii (strain DSM 17664 / CCUG 51855 / 37).